Here is a 176-residue protein sequence, read N- to C-terminus: ATP-dependent protease subunit HslV (176 aa).

Thr-6 is an active-site residue. Ser-161, Cys-164, and Thr-167 together coordinate Na(+).

Belongs to the peptidase T1B family. HslV subfamily. In terms of assembly, a double ring-shaped homohexamer of HslV is capped on each side by a ring-shaped HslU homohexamer. The assembly of the HslU/HslV complex is dependent on binding of ATP.

It is found in the cytoplasm. It carries out the reaction ATP-dependent cleavage of peptide bonds with broad specificity.. Its activity is regulated as follows. Allosterically activated by HslU binding. Its function is as follows. Protease subunit of a proteasome-like degradation complex believed to be a general protein degrading machinery. This chain is ATP-dependent protease subunit HslV, found in Thermosipho africanus (strain TCF52B).